The following is a 112-amino-acid chain: Colipase (112 aa).

Residues 1-17 (MEKVLALLLVTLTVAYA) form the signal peptide. A propeptide spans 18–22 (VPDPR) (enterostatin, activation peptide). 5 disulfides stabilise this stretch: C34–C45, C40–C56, C44–C78, C66–C86, and C80–C104.

Belongs to the colipase family. In terms of assembly, forms a 1:1 stoichiometric complex with pancreatic lipase. Expressed by the pancreas.

The protein resides in the secreted. Its function is as follows. Colipase is a cofactor of pancreatic lipase. It allows the lipase to anchor itself to the lipid-water interface. Without colipase the enzyme is washed off by bile salts, which have an inhibitory effect on the lipase. Functionally, enterostatin has a biological activity as a satiety signal. The protein is Colipase (CLPS) of Sus scrofa (Pig).